Consider the following 1873-residue polypeptide: Voltage-dependent L-type calcium channel subunit alpha-1S (1873 aa).

The disordered stretch occupies residues 1-23 (MEPSSPQDEGLRKKQPKKPVPEI). Residues 1 to 51 (MEPSSPQDEGLRKKQPKKPVPEILPRPPRALFCLTLENPLRKACISIVEWK) lie on the Cytoplasmic side of the membrane. Residues 38–337 (NPLRKACISI…LVLGVLSGEF (300 aa)) form an I repeat. Residues 52–70 (PFETIILLTIFANCVALAV) form a helical membrane-spanning segment. At 71–85 (YLPMPEDDNNSLNLG) the chain is on the extracellular side. N-linked (GlcNAc...) asparagine glycosylation occurs at Asn79. Residues 86 to 106 (LEKLEYFFLIVFSIEAAMKII) traverse the membrane as a helical segment. Topologically, residues 107-115 (AYGFLFHQD) are cytoplasmic. A helical membrane pass occupies residues 116 to 136 (AYLRSGWNVLDFTIVFLGVFT). Residues 137–160 (VILEQVNVIQSHTAPMSSKGAGLD) lie on the Extracellular side of the membrane. The helical transmembrane segment at 161–179 (VKALRAFRVLRPLRLVSGV) threads the bilayer. Over 180–196 (PSLQVVLNSIFKAMLPL) the chain is Cytoplasmic. A helical transmembrane segment spans residues 197–218 (FHIALLVLFMVIIYAIIGLELF). The Extracellular portion of the chain corresponds to 219–279 (KGKMHKTCYF…HGITHFDNFG (61 aa)). Intrachain disulfides connect Cys226-Cys254 and Cys245-Cys261. An N-linked (GlcNAc...) asparagine glycan is attached at Asn257. Positions 280–301 (FSMLTVYQCITMEGWTDVLYWV) form an intramembrane region, pore-forming. The Selectivity filter of repeat I motif lies at 290–293 (TMEG). Glu292 contacts Ca(2+). The Extracellular segment spans residues 302 to 309 (NDAIGNEW). A helical transmembrane segment spans residues 310–330 (PWIYFVTLILLGSFFILNLVL). Topologically, residues 331-432 (GVLSGEFTKE…WKCHDIVKSK (102 aa)) are cytoplasmic. Positions 357–374 (QQLDEDLRGYMSWITQGE) are binding to the beta subunit. Residues Ser393 and Ser397 each carry the phosphoserine modification. An II repeat occupies 418-664 (NRIFRWKCHD…VFLAIAVDNL (247 aa)). A helical membrane pass occupies residues 433 to 451 (VFYWLVILIVALNTLSIAS). Over 452–462 (EHHNQPLWLTR) the chain is Extracellular. A helical transmembrane segment spans residues 463-483 (LQDIANRVLLSLFTTEMLMKM). Residues 484 to 494 (YGLGLRQYFMS) lie on the Cytoplasmic side of the membrane. The chain crosses the membrane as a helical span at residues 495–514 (IFNRFDCFVVCSGILEILLV). Residues 515–523 (ESGAMTPLG) lie on the Extracellular side of the membrane. A helical transmembrane segment spans residues 524-542 (ISVLRCIRLLRIFKITKYW). The Cytoplasmic portion of the chain corresponds to 543–561 (TSLSNLVASLLNSIRSIAS). A helical membrane pass occupies residues 562 to 581 (LLLLLFLFIVIFALLGMQLF). Residues 582 to 601 (GGRYDFEDTEVRRSNFDNFP) are Extracellular-facing. An intramembrane region (pore-forming) is located at residues 602-623 (QALISVFQVLTGEDWTSMMYNG). Residues 612 to 615 (TGED) carry the Selectivity filter of repeat II motif. Glu614 provides a ligand contact to Ca(2+). At 624 to 633 (IMAYGGPSYP) the chain is on the extracellular side. A helical membrane pass occupies residues 634-653 (GMLVCIYFIILFVCGNYILL). The Cytoplasmic segment spans residues 654–799 (NVFLAIAVDN…VLCHRIVNAT (146 aa)). Disordered regions lie at residues 675–717 (KAKA…IPTT) and 731–757 (EVKD…LSPR). Ser687 carries the phosphoserine; by PKA modification. Residues 690-711 (LPDKSEEEKSTMAKKLEQKPKG) show a composition bias toward basic and acidic residues. The span at 742-751 (PGDDEEDEPE) shows a compositional bias: acidic residues. The segment at 747-760 (EDEPEIPLSPRPRP) is interaction with STAC, STAC2 and STAC3 (via SH3 domains). The III repeat unit spans residues 786 to 1068 (NKIRVLCHRI…IFVGFVIVTF (283 aa)). A helical membrane pass occupies residues 800–818 (WFTNFILLFILLSSAALAA). The Extracellular segment spans residues 819–830 (EDPIRADSMRNQ). Residues 831 to 850 (ILKHFDIGFTSVFTVEIVLK) traverse the membrane as a helical segment. The Cytoplasmic segment spans residues 851–866 (MTTYGAFLHKGSFCRN). Residues 867–885 (YFNMLDLLVVAVSLISMGL) form a helical membrane-spanning segment. The Extracellular segment spans residues 886–892 (ESSAISV). Residues 893–911 (VKILRVLRVLRPLRAINRA) form a helical membrane-spanning segment. Topologically, residues 912–930 (KGLKHVVQCMFVAISTIGN) are cytoplasmic. Residues 931 to 950 (IVLVTTLLQFMFACIGVQLF) form a helical membrane-spanning segment. Topologically, residues 951 to 1000 (KGKFFRCTDLSKMTEEECRGYYYVYKDGDPMQIELRHREWVHSDFHFDNV) are extracellular. A disulfide bridge connects residues Cys957 and Cys968. Positions 988 to 1077 (REWVHSDFHF…FQEQGETEYK (90 aa)) are dihydropyridine binding. Positions 1001 to 1021 (LSAMMSLFTVSTFEGWPQLLY) form an intramembrane region, pore-forming. Residues 1012–1015 (TFEG) carry the Selectivity filter of repeat III motif. Glu1014 contributes to the Ca(2+) binding site. The Extracellular segment spans residues 1022–1038 (KAIDSNAEDVGPIYNNR). A helical transmembrane segment spans residues 1039–1060 (VEMAIFFIIYIILIAFFMMNIF). Topologically, residues 1061–1118 (VGFVIVTFQEQGETEYKNCELDKNQRQCVQYALKARPLRCYIPKNPYQYQVWYIVTSS) are cytoplasmic. The stretch at 1105-1384 (NPYQYQVWYI…LFVAVIMDNF (280 aa)) is one IV repeat. A helical transmembrane segment spans residues 1119–1140 (YFEYLMFALIMLNTICLGMQHY). Asn1141 is a glycosylation site (N-linked (GlcNAc...) asparagine). At 1141 to 1148 (NQSEQMNH) the chain is on the extracellular side. Residues 1149 to 1170 (ISDILNVAFTIIFTLEMILKLM) traverse the membrane as a helical segment. Residues 1171-1180 (AFKARGYFGD) are Cytoplasmic-facing. The helical transmembrane segment at 1181-1200 (PWNVFDFLIVIGSIIDVILS) threads the bilayer. At 1201–1231 (EIDTFLASSGGLYCLGGGCGNVDPDESARIS) the chain is on the extracellular side. Residues 1232–1250 (SAFFRLFRVMRLIKLLSRA) form a helical membrane-spanning segment. Residues 1251-1268 (EGVRTLLWTFIKSFQALP) lie on the Cytoplasmic side of the membrane. A helical transmembrane segment spans residues 1269 to 1289 (YVALLIVMLFFIYAVIGMQMF). Topologically, residues 1290 to 1311 (GKIALVDGTQINRNNNFQTFPQ) are extracellular. Positions 1312-1330 (AVLLLFRCATGEAWQEILL) form an intramembrane region, pore-forming. The Selectivity filter of repeat IV motif lies at 1321–1324 (TGEA). Residues 1331–1356 (ACSYGKLCDPESDYAPGEEYTCGTNF) are Extracellular-facing. Residues 1337–1403 (LCDPESDYAP…LGPHHLDEFK (67 aa)) form a dihydropyridine binding region. A disulfide bridge connects residues Cys1338 and Cys1352. The tract at residues 1349–1391 (EYTCGTNFAYYYFISFYMLCAFLVINLFVAVIMDNFDYLTRDW) is phenylalkylamine binding. A helical transmembrane segment spans residues 1357–1381 (AYYYFISFYMLCAFLVINLFVAVIM). The Cytoplasmic segment spans residues 1382–1873 (DNFDYLTRDW…SQETLIPPRL (492 aa)). The interaction with calmodulin stretch occupies residues 1522 to 1542 (KFYATFLIQEHFRKFMKRQEE). Phosphoserine; by PKA and CAMK2 is present on Ser1575. At Ser1617 the chain carries Phosphoserine; by PKA. Positions 1731–1780 (MPRGQAPPAPCQCPRVESSMPEDRKSSTPGSLHEETPHSRSTRENTSRCS) are disordered. Positions 1751-1776 (PEDRKSSTPGSLHEETPHSRSTRENT) are enriched in basic and acidic residues.

This sequence belongs to the calcium channel alpha-1 subunit (TC 1.A.1.11) family. CACNA1S subfamily. As to quaternary structure, component of a calcium channel complex consisting of a pore-forming alpha subunit (CACNA1S) and the ancillary subunits CACNB1 or CACNB2, CACNG1 and CACNA2D1. The channel complex contains alpha, beta, gamma and delta subunits in a 1:1:1:1 ratio, i.e. it contains either CACNB1 or CACNB2. CACNA1S channel activity is modulated by the auxiliary subunits (CACNB1 or CACNB2, CACNG1 and CACNA2D1). Interacts with DYSF and JSRP1. Interacts with RYR1. Interacts with STAC, STAC2 and STAC3 (via their SH3 domains). Interacts with CALM. In terms of processing, the alpha-1S subunit is found in two isoforms in the skeletal muscle: a minor form of 212 kDa containing the complete amino acid sequence, and a major form of 190 kDa derived from the full-length form by post-translational proteolysis close to Phe-1690. Post-translationally, phosphorylated. Phosphorylation by PKA activates the calcium channel. Both the minor and major forms are phosphorylated in vitro by PKA. Phosphorylation at Ser-1575 is involved in beta-adrenergic-mediated regulation of the channel. Skeletal muscle specific.

Its subcellular location is the cell membrane. It localises to the sarcolemma. The protein resides in the T-tubule. It carries out the reaction Ca(2+)(in) = Ca(2+)(out). Channel activity is blocked by dihydropyridines (DHP), phenylalkylamines, and by benzothiazepines. In terms of biological role, pore-forming, alpha-1S subunit of the voltage-gated calcium channel that gives rise to L-type calcium currents in skeletal muscle. Calcium channels containing the alpha-1S subunit play an important role in excitation-contraction coupling in skeletal muscle via their interaction with RYR1, which triggers Ca(2+) release from the sarcoplasmic reticulum and ultimately results in muscle contraction. Long-lasting (L-type) calcium channels belong to the 'high-voltage activated' (HVA) group. This chain is Voltage-dependent L-type calcium channel subunit alpha-1S (CACNA1S), found in Homo sapiens (Human).